The following is a 468-amino-acid chain: Cytochrome P450-like protein L532 (468 aa).

Transmembrane regions (helical) follow at residues 22 to 42 and 172 to 192; these read WFAY…FGLI and VTVL…GVDV. Cys-415 contributes to the heme binding site.

Belongs to the cytochrome P450 family. The cofactor is heme.

The protein resides in the host membrane. It is found in the virion. This Acanthamoeba polyphaga mimivirus (APMV) protein is Cytochrome P450-like protein L532.